The sequence spans 205 residues: Recombination protein RecR (205 aa).

The C4-type zinc-finger motif lies at 64–79 (CSRCYFITQNDLCAIC). Residues 87–182 (RIVCVVEEPL…RVTRLARGLP (96 aa)) enclose the Toprim domain.

It belongs to the RecR family.

May play a role in DNA repair. It seems to be involved in an RecBC-independent recombinational process of DNA repair. It may act with RecF and RecO. The polypeptide is Recombination protein RecR (Roseiflexus castenholzii (strain DSM 13941 / HLO8)).